Here is a 121-residue protein sequence, read N- to C-terminus: Small ribosomal subunit protein uS13 (121 aa).

Residues 99–121 are disordered; the sequence is GQRTRTNARTRRGARKTVAGKKK. The span at 100 to 121 shows a compositional bias: basic residues; sequence QRTRTNARTRRGARKTVAGKKK.

It belongs to the universal ribosomal protein uS13 family. As to quaternary structure, part of the 30S ribosomal subunit. Forms a loose heterodimer with protein S19. Forms two bridges to the 50S subunit in the 70S ribosome.

Functionally, located at the top of the head of the 30S subunit, it contacts several helices of the 16S rRNA. In the 70S ribosome it contacts the 23S rRNA (bridge B1a) and protein L5 of the 50S subunit (bridge B1b), connecting the 2 subunits; these bridges are implicated in subunit movement. Contacts the tRNAs in the A and P-sites. The chain is Small ribosomal subunit protein uS13 from Synechococcus sp. (strain RCC307).